The sequence spans 219 residues: Proteasome subunit beta type-9 (219 aa).

The propeptide at 1–20 (MLQAGAPTAGSFRTGEVHTG) is removed in mature form. Residue threonine 21 is the Nucleophile of the active site. Residues lysine 53 and lysine 109 each carry the N6-acetyllysine modification.

This sequence belongs to the peptidase T1B family. The 26S proteasome consists of a 20S proteasome core and two 19S regulatory subunits. The 20S proteasome core is composed of 28 subunits that are arranged in four stacked rings, resulting in a barrel-shaped structure. The two end rings are each formed by seven alpha subunits, and the two central rings are each formed by seven beta subunits. The catalytic chamber with the active sites is on the inside of the barrel. Component of the immunoproteasome, where it displaces the equivalent housekeeping subunit PSMB6. Component of the spermatoproteasome, a form of the proteasome specifically found in testis. Interacts with NCOA2 and NCOA3. In terms of processing, autocleaved. The resulting N-terminal Thr residue of the mature subunit is responsible for the nucleophile proteolytic activity. Detected in the cytoplasmic lobe of elongated spermatids, in residual bodies, and in the acrosomal cap of round spermatids.

It localises to the cytoplasm. It is found in the nucleus. The enzyme catalyses Cleavage of peptide bonds with very broad specificity.. Functionally, the proteasome is a multicatalytic proteinase complex which is characterized by its ability to cleave peptides with Arg, Phe, Tyr, Leu, and Glu adjacent to the leaving group at neutral or slightly basic pH. The proteasome has an ATP-dependent proteolytic activity. This subunit is involved in antigen processing to generate class I binding peptides. This Rattus norvegicus (Rat) protein is Proteasome subunit beta type-9 (Psmb9).